An 84-amino-acid chain; its full sequence is Small ribosomal subunit protein bS18A (84 aa).

It belongs to the bacterial ribosomal protein bS18 family. As to quaternary structure, part of the 30S ribosomal subunit. Forms a tight heterodimer with protein bS6.

In terms of biological role, binds as a heterodimer with protein bS6 to the central domain of the 16S rRNA, where it helps stabilize the platform of the 30S subunit. The polypeptide is Small ribosomal subunit protein bS18A (Frankia alni (strain DSM 45986 / CECT 9034 / ACN14a)).